The chain runs to 55 residues: Cop-6 protein (55 aa).

Belongs to the transcriptional regulatory CopG/NikR family.

Its function is as follows. Acts in trans as a negative regulatory element in pE194 replication. This is Cop-6 protein from Staphylococcus aureus.